The primary structure comprises 613 residues: Dihydroxy-acid dehydratase (613 aa).

Aspartate 81 lines the Mg(2+) pocket. [2Fe-2S] cluster is bound at residue cysteine 122. Mg(2+) is bound by residues aspartate 123 and lysine 124. The residue at position 124 (lysine 124) is an N6-carboxylysine. Residue cysteine 193 participates in [2Fe-2S] cluster binding. Residue glutamate 489 coordinates Mg(2+). The active-site Proton acceptor is serine 515.

Belongs to the IlvD/Edd family. In terms of assembly, homodimer. Requires [2Fe-2S] cluster as cofactor. The cofactor is Mg(2+).

The catalysed reaction is (2R)-2,3-dihydroxy-3-methylbutanoate = 3-methyl-2-oxobutanoate + H2O. It carries out the reaction (2R,3R)-2,3-dihydroxy-3-methylpentanoate = (S)-3-methyl-2-oxopentanoate + H2O. Its pathway is amino-acid biosynthesis; L-isoleucine biosynthesis; L-isoleucine from 2-oxobutanoate: step 3/4. It functions in the pathway amino-acid biosynthesis; L-valine biosynthesis; L-valine from pyruvate: step 3/4. Functions in the biosynthesis of branched-chain amino acids. Catalyzes the dehydration of (2R,3R)-2,3-dihydroxy-3-methylpentanoate (2,3-dihydroxy-3-methylvalerate) into 2-oxo-3-methylpentanoate (2-oxo-3-methylvalerate) and of (2R)-2,3-dihydroxy-3-methylbutanoate (2,3-dihydroxyisovalerate) into 2-oxo-3-methylbutanoate (2-oxoisovalerate), the penultimate precursor to L-isoleucine and L-valine, respectively. The polypeptide is Dihydroxy-acid dehydratase (Pseudomonas putida (strain ATCC 700007 / DSM 6899 / JCM 31910 / BCRC 17059 / LMG 24140 / F1)).